Reading from the N-terminus, the 485-residue chain is Lysine--tRNA ligase (485 aa).

E391 and E398 together coordinate Mg(2+).

The protein belongs to the class-II aminoacyl-tRNA synthetase family. Homodimer. The cofactor is Mg(2+).

Its subcellular location is the cytoplasm. It catalyses the reaction tRNA(Lys) + L-lysine + ATP = L-lysyl-tRNA(Lys) + AMP + diphosphate. In Blochmanniella floridana, this protein is Lysine--tRNA ligase.